A 237-amino-acid chain; its full sequence is Cysteine-rich venom protein DIS2 (237 aa).

A signal peptide spans 1–18 (MFVFILLSLAAVLQQSFG). The region spanning 37–165 (VDKHNAFRRS…SYNYFYVCQY (129 aa)) is the SCP domain. 7 disulfides stabilise this stretch: cysteine 74–cysteine 152, cysteine 91–cysteine 166, cysteine 147–cysteine 163, cysteine 185–cysteine 192, cysteine 188–cysteine 197, cysteine 201–cysteine 234, and cysteine 219–cysteine 232. Residues 201 to 234 (CSREDVFMNCKSLVAQSNCQDDYIRKNCPATCFC) enclose the ShKT domain.

The protein belongs to the CRISP family. In terms of tissue distribution, expressed by the venom gland.

The protein localises to the secreted. Its function is as follows. Weakly blocks contraction of smooth muscle elicited by high potassium-induced depolarization, but does not block caffeine-stimulated contraction. May target voltage-gated calcium channels on smooth muscle. This is Cysteine-rich venom protein DIS2 from Dispholidus typus (Boomslang).